We begin with the raw amino-acid sequence, 567 residues long: Diacylglycerol kinase epsilon (567 aa).

The chain crosses the membrane as a helical span at residues 22 to 42; the sequence is LILWTLCSVLLPVFITFWCSL. 2 consecutive Phorbol-ester/DAG-type zinc fingers follow at residues 59–108 and 124–177; these read KHGW…RFQC and PHHW…NEKC. The DAGKc domain occupies 215-356; it reads KQWTPLIILA…LDRWKVQVTN (142 aa).

It belongs to the eukaryotic diacylglycerol kinase family. Expressed predominantly in testis. Expressed in endothelium, platelets and podocytes (at protein level).

It is found in the membrane. The protein resides in the cytoplasm. The enzyme catalyses a 1,2-diacyl-sn-glycerol + ATP = a 1,2-diacyl-sn-glycero-3-phosphate + ADP + H(+). The catalysed reaction is 1-hexadecanoyl-2-(5Z,8Z,11Z,14Z-eicosatetraenoyl)-sn-glycerol + ATP = 1-hexadecanoyl-2-(5Z,8Z,11Z,14Z-eicosatetraenoyl)-sn-glycero-3-phosphate + ADP + H(+). It catalyses the reaction 1-octadecanoyl-2-(5Z,8Z,11Z,14Z-eicosatetraenoyl)-sn-glycerol + ATP = 1-octadecanoyl-2-(5Z,8Z,11Z,14Z-eicosatetraenoyl)-sn-glycero-3-phosphate + ADP + H(+). It carries out the reaction 1-eicosanoyl-2-(5Z,8Z,11Z,14Z)-eicosatetraenoyl-sn-glycerol + ATP = 1-eicosanoyl-2-(5Z,8Z,11Z,14Z)-eicosatetraenoyl-sn-glycero-3-phosphate + ADP + H(+). The enzyme catalyses 1,2-di-(5Z,8Z,11Z,14Z)-eicosatetraenoyl-sn-glycerol + ATP = 1,2-di-(5Z,8Z,11Z,14Z)-eicosatetraenoyl-sn-glycero-3-phosphate + ADP + H(+). The catalysed reaction is 1-octadecanoyl-2-(9Z,12Z)-octadecadienoyl-sn-glycerol + ATP = 1-octadecanoyl-2-(9Z,12Z-octadecadienoyl)-sn-glycero-3-phosphate + ADP + H(+). It catalyses the reaction 1,2-di-(9Z,12Z-octadecadienoyl)-sn-glycerol + ATP = 1,2-di-(9Z,12Z-octadecadienoyl)-sn-glycero-3-phosphate + ADP + H(+). It carries out the reaction 1,2-di-(9Z-octadecenoyl)-sn-glycerol + ATP = 1,2-di-(9Z-octadecenoyl)-sn-glycero-3-phosphate + ADP + H(+). It participates in lipid metabolism; glycerolipid metabolism. Its activity is regulated as follows. Undergoes competitive inhibition by its own product 1,2-diacyl-sn-glycero-3-phosphate/phosphatidic acid. The strongest inhibition being observed in vitro with 1-octadecanoyl-2-(5Z,8Z,11Z,14Z-eicosatetraenoyl)-sn-glycero-3-phosphate, a major intermediate in the phosphatidylinositol turnover cycle and more generally by diacylglycerols with an arachidonoyl acyl chain at the sn-2 position. Its function is as follows. Membrane-bound diacylglycerol kinase that converts diacylglycerol/DAG into phosphatidic acid/phosphatidate/PA and regulates the respective levels of these two bioactive lipids. Thereby, acts as a central switch between the signaling pathways activated by these second messengers with different cellular targets and opposite effects in numerous biological processes. Also plays an important role in the biosynthesis of complex lipids. Displays specificity for diacylglycerol substrates with an arachidonoyl acyl chain at the sn-2 position, with the highest activity toward 1-octadecanoyl-2-(5Z,8Z,11Z,14Z-eicosatetraenoyl)-sn-glycerol the main diacylglycerol intermediate within the phosphatidylinositol turnover cycle. Can also phosphorylate diacylglycerol substrates with a linoleoyl acyl chain at the sn-2 position but much less efficiently. The protein is Diacylglycerol kinase epsilon (DGKE) of Homo sapiens (Human).